Reading from the N-terminus, the 287-residue chain is tRNA pseudouridine synthase B (287 aa).

Aspartate 38 (nucleophile) is an active-site residue.

It belongs to the pseudouridine synthase TruB family. Type 1 subfamily.

The catalysed reaction is uridine(55) in tRNA = pseudouridine(55) in tRNA. Functionally, responsible for synthesis of pseudouridine from uracil-55 in the psi GC loop of transfer RNAs. The protein is tRNA pseudouridine synthase B of Fusobacterium nucleatum subsp. nucleatum (strain ATCC 25586 / DSM 15643 / BCRC 10681 / CIP 101130 / JCM 8532 / KCTC 2640 / LMG 13131 / VPI 4355).